The chain runs to 872 residues: Homeobox-leucine zipper protein ROC6 (872 aa).

Disordered stretches follow at residues 28-53 (VHNS…GLSL) and 67-130 (NRSL…HRHT). The segment covering 74-85 (GNGGSGSGGDGD) has biased composition (gly residues). A compositionally biased stretch (basic and acidic residues) spans 86–99 (SLGRGREEENDSRS). The segment covering 119 to 130 (PRKKKKRYHRHT) has biased composition (basic residues). Positions 122–181 (KKKRYHRHTPQQIQELEAVFKECPHPDEKQRMELSRRLNLESRQVKFWFQNRRTQMKQTQ) form a DNA-binding region, homeobox. Residues 176 to 248 (QMKQTQIERH…LKDELDRVCA (73 aa)) are a coiled coil. In terms of domain architecture, START spans 340–583 (GAIDRAVLLE…LQRQCQYLAI (244 aa)). The segment at 792 to 818 (HNNGASPSPAEVGSGASPNSAAGGGGG) is disordered.

Belongs to the HD-ZIP homeobox family. Class IV subfamily.

It localises to the nucleus. Functionally, probable transcription factor. The chain is Homeobox-leucine zipper protein ROC6 (ROC6) from Oryza sativa subsp. japonica (Rice).